The following is a 424-amino-acid chain: Light-independent protochlorophyllide reductase subunit N (424 aa).

Positions 27, 52, and 113 each coordinate [4Fe-4S] cluster.

Belongs to the BchN/ChlN family. Protochlorophyllide reductase is composed of three subunits; BchL, BchN and BchB. Forms a heterotetramer of two BchB and two BchN subunits. Requires [4Fe-4S] cluster as cofactor.

It carries out the reaction chlorophyllide a + oxidized 2[4Fe-4S]-[ferredoxin] + 2 ADP + 2 phosphate = protochlorophyllide a + reduced 2[4Fe-4S]-[ferredoxin] + 2 ATP + 2 H2O. It functions in the pathway porphyrin-containing compound metabolism; bacteriochlorophyll biosynthesis (light-independent). Functionally, component of the dark-operative protochlorophyllide reductase (DPOR) that uses Mg-ATP and reduced ferredoxin to reduce ring D of protochlorophyllide (Pchlide) to form chlorophyllide a (Chlide). This reaction is light-independent. The NB-protein (BchN-BchB) is the catalytic component of the complex. The polypeptide is Light-independent protochlorophyllide reductase subunit N (Halorhodospira halophila (strain DSM 244 / SL1) (Ectothiorhodospira halophila (strain DSM 244 / SL1))).